The chain runs to 137 residues: Methylmalonyl-CoA decarboxylase subunit delta (137 aa).

A helical transmembrane segment spans residues 30–50; sequence VTVVLGMGITVVALIFLMYII.

It belongs to the OadG family. The methylmalonyl-CoA decarboxylase is composed of four subunits: the carboxyltransferase alpha subunit (MmdA), the tunnel beta subunit (MmdB), the biotin-containing gamma subunit (MmdC) and the delta subunit (MmdD).

The protein localises to the cell membrane. It carries out the reaction (S)-methylmalonyl-CoA + Na(+)(in) + H(+)(out) = propanoyl-CoA + Na(+)(out) + CO2. In terms of biological role, subunit of the sodium ion pump methylmalonyl-CoA decarboxylase, which converts the chemical energy of a decarboxylation reaction into an electrochemical gradient of Na(+) ions across the cytoplasmic membrane, thereby creating a sodium ion motive force that is used for ATP synthesis. The delta subunit is required for catalytic activity as well as for the proper assembly of the individual subunits to an enzyme complex. In Propionigenium modestum, this protein is Methylmalonyl-CoA decarboxylase subunit delta.